The chain runs to 463 residues: MYGNYSHFMKFPAGYGGSPGHTGSTSMSPSAALSTGKPMDSHPSYTDTPVSAPRTLSAVGTPLNALGSPYRVITSAMGPPSGALAAPPGINLVAPPSSQLNVVNSVSSSEDIKPLPGLPGIGNMNYPSTSPGSLVKHICAICGDRSSGKHYGVYSCEGCKGFFKRTIRKDLIYTCRDNKDCLIDKRQRNRCQYCRYQKCLVMGMKREAVQEERQRSRERAESEAECASSGHEDMPVERILEAELAVEPKTESYGDMNMENSTNDPVTNICHAADKQLFTLVEWAKRIPHFSDLTLEDQVILLRAGWNELLIASFSHRSVSVQDGILLATGLHVHRSSAHSAGVGSIFDRVLTELVSKMKDMQMDKSELGCLRAIVLFNPDAKGLSNPSEVETLREKVYATLEAYTKQKYPEQPGRFAKLLLRLPALRSIGLKCLEHLFFFKLIGDTPIDTFLMEMLETPLQIT.

Residues 1–138 (MYGNYSHFMK…TSPGSLVKHI (138 aa)) form a modulating region. The disordered stretch occupies residues 18 to 53 (SPGHTGSTSMSPSAALSTGKPMDSHPSYTDTPVSAP). Residues 21 to 33 (HTGSTSMSPSAAL) are compositionally biased toward polar residues. 2 consecutive NR C4-type zinc fingers follow at residues 139 to 159 (CAIC…CEGC) and 175 to 194 (CRDN…CQYC). The segment at residues 139–204 (CAICGDRSSG…RYQKCLVMGM (66 aa)) is a DNA-binding region (nuclear receptor). The segment at 205–230 (KREAVQEERQRSRERAESEAECASSG) is hinge. The segment covering 211 to 222 (EERQRSRERAES) has biased composition (basic and acidic residues). Residues 211-232 (EERQRSRERAESEAECASSGHE) are disordered. The 229-residue stretch at 231 to 459 (HEDMPVERIL…TFLMEMLETP (229 aa)) folds into the NR LBD domain.

It belongs to the nuclear hormone receptor family. NR2 subfamily. In terms of assembly, homodimer. Heterodimer with a RAR molecule. Binds DNA preferentially as a RAR/RXR heterodimer. Interacts with RARA. In terms of processing, acetylated by EP300.

The protein resides in the nucleus. Its subcellular location is the cytoplasm. Functionally, receptor for retinoic acid. Retinoic acid receptors bind as heterodimers to their target response elements in response to their ligands, all-trans or 9-cis retinoic acid, and regulate gene expression in various biological processes. The RAR/RXR heterodimers bind to the retinoic acid response elements (RARE) composed of tandem 5'-AGGTCA-3' sites known as DR1-DR5. The high affinity ligand for RXRs is 9-cis retinoic acid. In Pongo abelii (Sumatran orangutan), this protein is Retinoic acid receptor RXR-gamma (RXRG).